Consider the following 175-residue polypeptide: Putative lipoprotein LppN (175 aa).

Residues 1 to 20 form the signal peptide; the sequence is MRLPGRHVLYALSAVTMLAA. A lipid anchor (N-palmitoyl cysteine) is attached at C21. The S-diacylglycerol cysteine moiety is linked to residue C21. The disordered stretch occupies residues 31–56; it reads ASTNMNPTNPPATAETATVSPTPAPQ. Over residues 33–48 the composition is skewed to low complexity; the sequence is TNMNPTNPPATAETAT.

It is found in the cell membrane. The sequence is that of Putative lipoprotein LppN (lppN) from Mycobacterium bovis (strain ATCC BAA-935 / AF2122/97).